The sequence spans 97 residues: Large ribosomal subunit protein uL23 (97 aa).

Belongs to the universal ribosomal protein uL23 family. Part of the 50S ribosomal subunit. Contacts protein L29, and trigger factor when it is bound to the ribosome.

Functionally, one of the early assembly proteins it binds 23S rRNA. One of the proteins that surrounds the polypeptide exit tunnel on the outside of the ribosome. Forms the main docking site for trigger factor binding to the ribosome. In Clostridium perfringens (strain SM101 / Type A), this protein is Large ribosomal subunit protein uL23.